The following is a 159-amino-acid chain: CASP-like protein 1C1 (159 aa).

The Cytoplasmic portion of the chain corresponds to 1 to 6 (MAKIKR). A helical membrane pass occupies residues 7 to 27 (IITTLVRLLVLGAALSATIVM). The Extracellular portion of the chain corresponds to 28–50 (VTSHDSAEVLNLSFDAKYTNARA). N38 carries N-linked (GlcNAc...) asparagine glycosylation. Residues 51–73 (FVYFAITNAIASGYSFIALFLSF) form a helical membrane-spanning segment. Topologically, residues 74–86 (STPLWHLVFLLDV) are cytoplasmic. A helical transmembrane segment spans residues 87–107 (FMTLLLTSSISVALAIADVGK). Residues 108-130 (KGNSHAGWLPVCGQVPEFCDHVT) lie on the Extracellular side of the membrane. The chain crosses the membrane as a helical span at residues 131-151 (GALIAGFSAAVLYLVLLLFSI). Residues 152–159 (HAVLNPKP) lie on the Cytoplasmic side of the membrane.

The protein belongs to the Casparian strip membrane proteins (CASP) family. In terms of assembly, homodimer and heterodimers.

The protein resides in the cell membrane. This chain is CASP-like protein 1C1, found in Vitis vinifera (Grape).